A 186-amino-acid chain; its full sequence is Phosphoheptose isomerase 1 (186 aa).

Residues 33 to 186 (LCECLKKGGK…TLCQIIDESF (154 aa)) enclose the SIS domain. Residue 48-50 (NGG) coordinates substrate. Residues histidine 57 and glutamate 61 each coordinate Zn(2+). Substrate-binding positions include glutamate 61, 90 to 91 (ND), 116 to 118 (STS), serine 121, and glutamine 168. The Zn(2+) site is built by glutamine 168 and histidine 176.

It belongs to the SIS family. GmhA subfamily. As to quaternary structure, homotetramer. Zn(2+) serves as cofactor.

Its subcellular location is the cytoplasm. The enzyme catalyses 2 D-sedoheptulose 7-phosphate = D-glycero-alpha-D-manno-heptose 7-phosphate + D-glycero-beta-D-manno-heptose 7-phosphate. Its pathway is carbohydrate biosynthesis; D-glycero-D-manno-heptose 7-phosphate biosynthesis; D-glycero-alpha-D-manno-heptose 7-phosphate and D-glycero-beta-D-manno-heptose 7-phosphate from sedoheptulose 7-phosphate: step 1/1. It participates in bacterial outer membrane biogenesis; LOS core biosynthesis. Catalyzes the isomerization of sedoheptulose 7-phosphate in D-glycero-D-manno-heptose 7-phosphate. The protein is Phosphoheptose isomerase 1 (gmhA1) of Campylobacter jejuni subsp. jejuni serotype O:2 (strain ATCC 700819 / NCTC 11168).